A 103-amino-acid polypeptide reads, in one-letter code: Large ribosomal subunit protein uL23 (103 aa).

The protein belongs to the universal ribosomal protein uL23 family. In terms of assembly, part of the 50S ribosomal subunit. Contacts protein L29, and trigger factor when it is bound to the ribosome.

Its function is as follows. One of the early assembly proteins it binds 23S rRNA. One of the proteins that surrounds the polypeptide exit tunnel on the outside of the ribosome. Forms the main docking site for trigger factor binding to the ribosome. The polypeptide is Large ribosomal subunit protein uL23 (Pelodictyon phaeoclathratiforme (strain DSM 5477 / BU-1)).